We begin with the raw amino-acid sequence, 917 residues long: Alanine--tRNA ligase (917 aa).

Zn(2+) contacts are provided by His615, His619, Cys719, and His723.

This sequence belongs to the class-II aminoacyl-tRNA synthetase family. Zn(2+) serves as cofactor.

It is found in the cytoplasm. It catalyses the reaction tRNA(Ala) + L-alanine + ATP = L-alanyl-tRNA(Ala) + AMP + diphosphate. Catalyzes the attachment of alanine to tRNA(Ala) in a two-step reaction: alanine is first activated by ATP to form Ala-AMP and then transferred to the acceptor end of tRNA(Ala). Also edits incorrectly charged Ser-tRNA(Ala) and Gly-tRNA(Ala) via its editing domain. The sequence is that of Alanine--tRNA ligase from Thermococcus kodakarensis (strain ATCC BAA-918 / JCM 12380 / KOD1) (Pyrococcus kodakaraensis (strain KOD1)).